The following is a 457-amino-acid chain: ATP synthase subunit beta (457 aa).

147–154 provides a ligand contact to ATP; sequence GGAGVGKT.

The protein belongs to the ATPase alpha/beta chains family. In terms of assembly, F-type ATPases have 2 components, CF(1) - the catalytic core - and CF(0) - the membrane proton channel. CF(1) has five subunits: alpha(3), beta(3), gamma(1), delta(1), epsilon(1). CF(0) has three main subunits: a(1), b(2) and c(9-12). The alpha and beta chains form an alternating ring which encloses part of the gamma chain. CF(1) is attached to CF(0) by a central stalk formed by the gamma and epsilon chains, while a peripheral stalk is formed by the delta and b chains.

It localises to the cell inner membrane. The catalysed reaction is ATP + H2O + 4 H(+)(in) = ADP + phosphate + 5 H(+)(out). Its function is as follows. Produces ATP from ADP in the presence of a proton gradient across the membrane. The catalytic sites are hosted primarily by the beta subunits. This chain is ATP synthase subunit beta, found in Histophilus somni (strain 2336) (Haemophilus somnus).